Reading from the N-terminus, the 869-residue chain is Ubiquitin carboxyl-terminal hydrolase 29 (869 aa).

2 stretches are compositionally biased toward polar residues: residues 104–120 (SSTP…MSSQ) and 140–150 (SLNTTPESGTP). The interval 104–226 (SSTPCESQQP…KAVTLREQEK (123 aa)) is disordered. A compositionally biased stretch (basic and acidic residues) spans 187 to 200 (VNKDIPKENTPDQK). Basic residues predominate over residues 201 to 212 (KKSRRYYSRNRG). Over residues 213 to 226 (GKAEKAVTLREQEK) the composition is skewed to basic and acidic residues. The USP domain maps to 289–826 (EGFPNLGNTC…SGYIFFYMHN (538 aa)). The Nucleophile role is filled by cysteine 298. Residues 723 to 754 (SQEDPEKDLSRSPELQEDDPHSFAFGSDDSKD) form a disordered region. Histidine 781 functions as the Proton acceptor in the catalytic mechanism.

Belongs to the peptidase C19 family. Predominantly expressed in brain and testis. Highest expression levels in adult brain, especially in the cerebral cortex and hippocampus, and in the forebrain, face, and limb buds of midgestation mouse embryos.

It localises to the cytoplasm. The protein resides in the perinuclear region. It catalyses the reaction Thiol-dependent hydrolysis of ester, thioester, amide, peptide and isopeptide bonds formed by the C-terminal Gly of ubiquitin (a 76-residue protein attached to proteins as an intracellular targeting signal).. In terms of biological role, deubiquitinase involved in innate antiviral immunity by mediating 'Lys-48'-linked deubiquitination of CGAS, thereby promoting its stabilization. The polypeptide is Ubiquitin carboxyl-terminal hydrolase 29 (Mus musculus (Mouse)).